Reading from the N-terminus, the 239-residue chain is Small ribosomal subunit protein uS3 (239 aa).

The KH type-2 domain occupies 39-107 (VRQVLRKKMS…PVHINVIEVR (69 aa)). The disordered stretch occupies residues 214–239 (SQEKQDDGSRGDRNADRSSRRSREVR). Basic and acidic residues predominate over residues 216 to 239 (EKQDDGSRGDRNADRSSRRSREVR).

This sequence belongs to the universal ribosomal protein uS3 family. As to quaternary structure, part of the 30S ribosomal subunit. Forms a tight complex with proteins S10 and S14.

Its function is as follows. Binds the lower part of the 30S subunit head. Binds mRNA in the 70S ribosome, positioning it for translation. The polypeptide is Small ribosomal subunit protein uS3 (Xylella fastidiosa (strain M23)).